Reading from the N-terminus, the 387-residue chain is Erythronate-4-phosphate dehydrogenase (387 aa).

The substrate site is built by Ser-45 and Thr-67. Residue Asp-147 participates in NAD(+) binding. The active site involves Arg-208. Asp-232 provides a ligand contact to NAD(+). Glu-237 is an active-site residue. His-254 acts as the Proton donor in catalysis. Gly-257 serves as a coordination point for NAD(+). Tyr-258 is a substrate binding site.

The protein belongs to the D-isomer specific 2-hydroxyacid dehydrogenase family. PdxB subfamily. Homodimer.

The protein localises to the cytoplasm. It catalyses the reaction 4-phospho-D-erythronate + NAD(+) = (R)-3-hydroxy-2-oxo-4-phosphooxybutanoate + NADH + H(+). The protein operates within cofactor biosynthesis; pyridoxine 5'-phosphate biosynthesis; pyridoxine 5'-phosphate from D-erythrose 4-phosphate: step 2/5. Its function is as follows. Catalyzes the oxidation of erythronate-4-phosphate to 3-hydroxy-2-oxo-4-phosphonooxybutanoate. This chain is Erythronate-4-phosphate dehydrogenase, found in Shewanella sediminis (strain HAW-EB3).